A 329-amino-acid polypeptide reads, in one-letter code: Ubiquitin carboxyl-terminal hydrolase isozyme L5 (329 aa).

The region spanning 7–225 (EWCLMESDPG…IRFNLMAIVS (219 aa)) is the UCH catalytic domain. N6-succinyllysine is present on K47. C88 serves as the catalytic Nucleophile. An N6-acetyllysine modification is found at K158. H164 serves as the catalytic Proton donor. K289 bears the N6-succinyllysine mark. Positions 291-319 (NYLPFIMELLKTLAEHQQLIPLVEKAKEK) constitute a ULD domain. The segment at 313 to 329 (VEKAKEKQNAKKAQETK) is interaction with ADRM1.

This sequence belongs to the peptidase C12 family. As to quaternary structure, component of the 19S (PA700) regulatory complex of the 26S proteasome. Interacts with ADRM1 and NFRKB. Component of the INO80 complex; specifically part of a complex module associated with N-terminus of INO80.

It localises to the cytoplasm. It is found in the nucleus. The enzyme catalyses Thiol-dependent hydrolysis of ester, thioester, amide, peptide and isopeptide bonds formed by the C-terminal Gly of ubiquitin (a 76-residue protein attached to proteins as an intracellular targeting signal).. Activated by ADRM1. Inhibited by interaction with NFRKB. Protease that specifically cleaves 'Lys-48'-linked polyubiquitin chains. Deubiquitinating enzyme associated with the 19S regulatory subunit of the 26S proteasome. Putative regulatory component of the INO80 complex; however is inactive in the INO80 complex and is activated by a transient interaction of the INO80 complex with the proteasome via ADRM1. In Sus scrofa (Pig), this protein is Ubiquitin carboxyl-terminal hydrolase isozyme L5 (UCHL5).